Reading from the N-terminus, the 151-residue chain is Decarboxylase nsrE (151 aa).

An EthD domain is found at 31 to 126 (AGMTEEDYHN…VGDHENFADT (96 aa)).

Belongs to the tpcK family.

It carries out the reaction atrochrysone carboxylate + H(+) = atrochrysone + CO2. It participates in secondary metabolite biosynthesis. Its function is as follows. Decarboxylase; part of the gene cluster that mediates the biosynthesis of the tetrahydroxanthone dimer neosartorin, which exhibits antibacterial activity. The two different monomeric units appear to be synthesized by the same set of enzymes, among which the Baeyer-Villiger monooxygenase nsrF is the key enzyme for the divergence of the biosynthetic routes. The pathway begins with the synthesis of atrochrysone thioester by the polyketide synthase nsrB. The atrochrysone carboxyl ACP thioesterase nsrC then breaks the thioester bond and releases the atrochrysone carboxylic acid from AacuL. Atrochrysone carboxylic acid is decarboxylated by the decarboxylase nsrE, and oxidized by the anthrone oxygenase nsrD to yield emodin. Emodin is then reduced to emodin hydroquinone by the oxidoreductase nsrR. A-ring reduction by the short chain dehydrogenase nsrJ, dehydration by the scytalone dehydratase-like protein nsrI and probable spontaneous re-oxidation, results in overall deoxygenation to chrysophanol. The Baeyer-Villiger monooxygenase nsrF accepts chrysophanol as a substrate to insert one oxygen atom at two different positions to yield the precursors of both monomric units. NsrF is promiscuous/flexible in interacting with the 2 (non methylated and methylated) aromatic rings of chrysophanol, thus diverging the biosynthetic pathway at this point. After the hydrolysis of the lactones, methylesterification by the methyltransferase nsrG yields respectively moniliphenone and 2,2',6'-trihydroxy-4-methyl-6-methoxya-cyldiphenylmethanone. The next steps are the hydroxylation by the FAD-dependent monooxygenase nsrK, followed by isomerization by the monooxygenase nsrQ. The short chain dehydrogenase/reductase nsrO then catalyzes the C-5 ketoreduction to give the xanthone skeleton of blennolide C and 5-acetylblennolide A. The acetyltransferase nsrL has a strict substrate specificity and uses only blennolide A but not blennolide C to yield 5-acetylblennolide A as the single-acetylated product. In the final step of the biosynthesis, the heterodimerization of the 2 xanthones, blennolide C and 5-acetylblennolide A, is catalyzed by the cytochrome P450 monooxygenase nsrP. NsrP can utilize at least three different xanthones as its substrates to perform the dimerization reaction. The chain is Decarboxylase nsrE from Aspergillus novofumigatus (strain IBT 16806).